The following is a 457-amino-acid chain: D-hydantoinase (457 aa).

Zn(2+) contacts are provided by His-57 and His-59. A Phosphoserine modification is found at Ser-69. Lys-148 contacts Zn(2+). Lys-148 bears the N6-carboxylysine mark. Tyr-153 is a substrate binding site. 2 residues coordinate Zn(2+): His-181 and His-237. Residue Thr-286 participates in substrate binding. Asp-313 contacts Zn(2+). Asn-335 lines the substrate pocket.

This sequence belongs to the metallo-dependent hydrolases superfamily. Hydantoinase/dihydropyrimidinase family. As to quaternary structure, homotetramer. It depends on Zn(2+) as a cofactor. Post-translationally, carboxylation allows a single lysine to coordinate two zinc ions.

In terms of biological role, catalyzes the stereospecific hydrolysis of the cyclic amide bond of D-hydantoin derivatives. This Rhizobium radiobacter (Agrobacterium tumefaciens) protein is D-hydantoinase (hyuA).